The primary structure comprises 467 residues: MQDQKGKIISVIGPVVDVKFPEGQLPNVYDALKVKNEYSGEELILEVEQLIGDDTARCVAMDSTDGIRRGQEVINTLEPIKVPVGDTTLGRMVNLLGKPIDEKGDVEGEEYWPIHRDPPSLNEQDTSIEILETGIKCIDLLAPFPRGGKIGFFGGAGVGKTVLVMELIRNIAKEHQGISVFAGVGERTREGNDLWLEMQETGVIDSTALVFGQMNEPPGARFRVPLTALTISEYFRDRQKKDVLLFIDNIFRFVQAGSEVSALLGRMPSAVGYQPTLASDMGQLQERITSTKDGSITSVQAIYVPADDFTDPAPATTFAHLDANINLSRRQSELGLYPAVDPLDSTSKMLDPNVVGQDHYSVAREVKEVLQRYEDLQDIIAILGIEELSEEDRQIVNRARRIQRFLTQPFFVAERFTNYSGKYVNVEDTIKGFKEILEGKHDDLPESAFYMVGTIEEAVEKAKKMNE.

154–161 (GGAGVGKT) provides a ligand contact to ATP.

It belongs to the ATPase alpha/beta chains family. In terms of assembly, F-type ATPases have 2 components, CF(1) - the catalytic core - and CF(0) - the membrane proton channel. CF(1) has five subunits: alpha(3), beta(3), gamma(1), delta(1), epsilon(1). CF(0) has three main subunits: a(1), b(2) and c(9-12). The alpha and beta chains form an alternating ring which encloses part of the gamma chain. CF(1) is attached to CF(0) by a central stalk formed by the gamma and epsilon chains, while a peripheral stalk is formed by the delta and b chains.

Its subcellular location is the cell inner membrane. The catalysed reaction is ATP + H2O + 4 H(+)(in) = ADP + phosphate + 5 H(+)(out). In terms of biological role, produces ATP from ADP in the presence of a proton gradient across the membrane. The catalytic sites are hosted primarily by the beta subunits. The protein is ATP synthase subunit beta of Petrotoga mobilis (strain DSM 10674 / SJ95).